Consider the following 282-residue polypeptide: Tumor necrosis factor ligand superfamily member 6 (282 aa).

Topologically, residues 1–82 (MQQPFNYPYP…KKKRDHNAGL (82 aa)) are cytoplasmic. Positions 30 to 73 (FPCPASVPGRPGQRRPPPPPPPPPPPPTLLPSRPLPPLPPPSLK) are disordered. Pro residues predominate over residues 43–71 (RRPPPPPPPPPPPPTLLPSRPLPPLPPPS). A helical; Signal-anchor for type II membrane protein membrane pass occupies residues 83–103 (CLLVMFFMVLVALVGLGLGMF). The Extracellular segment spans residues 104–282 (QLFHLQKELT…SKTFFGLYKL (179 aa)). A compositionally biased stretch (basic and acidic residues) spans 119–132 (ASQRHTESSLEKQI). The tract at residues 119–140 (ASQRHTESSLEKQIGHPNLPSE) is disordered. Positions 146–282 (KVAHLTGKPN…SKTFFGLYKL (137 aa)) constitute a THD domain. Residue Asn-185 is glycosylated (N-linked (GlcNAc...) asparagine). Residues Cys-203 and Cys-234 are joined by a disulfide bond. N-linked (GlcNAc...) asparagine glycans are attached at residues Asn-251 and Asn-261.

It belongs to the tumor necrosis factor family. As to quaternary structure, homotrimer. Interacts with ARHGAP9, BAIAP2L1, BTK, CACNB3, CACNB4, CRK, DLG2, DNMBP, DOCK4, EPS8L3, FGR, FYB1, FYN, HCK, ITK, ITSN2, KALRN, LYN, MACC1, MIA, MPP4, MYO15A, NCF1, NCK1, NCK2, NCKIPSD, OSTF1, PIK3R1, PSTPIP1, RIMBP3C, SAMSN1, SH3GL3, SH3PXD2B, SH3PXD2A, SH3RF2, SKAP2, SNX33, SNX9, SORBS3, SPTA1, SRC, SRGAP1, SRGAP2, SRGAP3, TEC, TJP3 and YES1. In terms of processing, the soluble form derives from the membrane form by proteolytic processing. The membrane-bound form undergoes two successive intramembrane proteolytic cleavages. The first one is processed by ADAM10 producing an N-terminal fragment, which lacks the receptor-binding extracellular domain. This ADAM10-processed FasL (FasL APL) remnant form is still membrane anchored and further processed by SPPL2A that liberates the FasL intracellular domain (FasL ICD). FasL shedding by ADAM10 is a prerequisite for subsequent intramembrane cleavage by SPPL2A in T-cells. Phosphorylated by FGR on tyrosine residues; this is required for ubiquitination and subsequent internalization. Post-translationally, N-glycosylated. Glycosylation enhances apoptotic activity. In terms of processing, monoubiquitinated.

It is found in the cell membrane. The protein localises to the cytoplasmic vesicle lumen. The protein resides in the lysosome lumen. It localises to the secreted. Its subcellular location is the nucleus. In terms of biological role, cytokine that binds to TNFRSF6/FAS, a receptor that transduces the apoptotic signal into cells. Involved in cytotoxic T-cell-mediated apoptosis, natural killer cell-mediated apoptosis and in T-cell development. Initiates fratricidal/suicidal activation-induced cell death (AICD) in antigen-activated T-cells contributing to the termination of immune responses. TNFRSF6/FAS-mediated apoptosis also has a role in the induction of peripheral tolerance. Binds to TNFRSF6B/DcR3, a decoy receptor that blocks apoptosis. Induces FAS-mediated activation of NF-kappa-B, initiating non-apoptotic signaling pathways. Can induce apoptosis but does not appear to be essential for this process. Its function is as follows. Cytoplasmic form induces gene transcription inhibition. This is Tumor necrosis factor ligand superfamily member 6 (FASLG) from Sus scrofa (Pig).